We begin with the raw amino-acid sequence, 101 residues long: Apolipoprotein C-II (101 aa).

Residues 1–22 form the signal peptide; that stretch reads MGIRYLLVLVLVLLVLGCEVQG. Residues 66 to 74 form a lipid binding region; sequence TVDEKIREI. The tract at residues 78-101 is lipoprotein lipase cofactor; sequence STAAVSTYAGIFTDQLLSMLKGDQ.

This sequence belongs to the apolipoprotein C2 family. Post-translationally, proapolipoprotein C-II is synthesized as a sialic acid containing glycoprotein which is subsequently desialylated prior to its proteolytic processing. In terms of processing, proapolipoprotein C-II, the major form found in plasma undergoes proteolytic cleavage of its N-terminal hexapeptide to generate apolipoprotein C-II, which occurs as the minor form in plasma.

The protein localises to the secreted. Component of chylomicrons, very low-density lipoproteins (VLDL), low-density lipoproteins (LDL), and high-density lipoproteins (HDL) in plasma. Plays an important role in lipoprotein metabolism as an activator of lipoprotein lipase. Both proapolipoprotein C-II and apolipoprotein C-II can activate lipoprotein lipase. The protein is Apolipoprotein C-II (APOC2) of Mirounga angustirostris (Northern elephant seal).